A 206-amino-acid chain; its full sequence is Small ribosomal subunit protein uS4 (206 aa).

In terms of domain architecture, S4 RNA-binding spans 96–156 (SRLDNVVYRM…EKSRNQSRIA (61 aa)).

It belongs to the universal ribosomal protein uS4 family. Part of the 30S ribosomal subunit. Contacts protein S5. The interaction surface between S4 and S5 is involved in control of translational fidelity.

One of the primary rRNA binding proteins, it binds directly to 16S rRNA where it nucleates assembly of the body of the 30S subunit. In terms of biological role, with S5 and S12 plays an important role in translational accuracy. This is Small ribosomal subunit protein uS4 from Hydrogenovibrio crunogenus (strain DSM 25203 / XCL-2) (Thiomicrospira crunogena).